Reading from the N-terminus, the 367-residue chain is Oleoyl-acyl carrier protein thioesterase 2, chloroplastic (367 aa).

The transit peptide at 1–48 (MLKLSCNVTDHIHNLFSNSRRIFVPVHRQTRPISCFQLKKEPLRAILS) directs the protein to the chloroplast. Residues Asn-263, His-265, and Cys-300 contribute to the active site.

This sequence belongs to the acyl-ACP thioesterase family.

It localises to the plastid. Its subcellular location is the chloroplast. The enzyme catalyses (9Z)-octadecenoyl-[ACP] + H2O = (9Z)-octadecenoate + holo-[ACP] + H(+). Its function is as follows. Plays an essential role in chain termination during de novo fatty acid synthesis. Possesses high thioesterase activity for oleoyl-ACP versus other acyl-ACPs. The chain is Oleoyl-acyl carrier protein thioesterase 2, chloroplastic (FATA2) from Arabidopsis thaliana (Mouse-ear cress).